We begin with the raw amino-acid sequence, 392 residues long: Anhydro-N-acetylmuramic acid kinase (392 aa).

22 to 29 (GTSMDGVD) is a binding site for ATP.

This sequence belongs to the anhydro-N-acetylmuramic acid kinase family.

It catalyses the reaction 1,6-anhydro-N-acetyl-beta-muramate + ATP + H2O = N-acetyl-D-muramate 6-phosphate + ADP + H(+). It participates in amino-sugar metabolism; 1,6-anhydro-N-acetylmuramate degradation. Its pathway is cell wall biogenesis; peptidoglycan recycling. Catalyzes the specific phosphorylation of 1,6-anhydro-N-acetylmuramic acid (anhMurNAc) with the simultaneous cleavage of the 1,6-anhydro ring, generating MurNAc-6-P. Is required for the utilization of anhMurNAc either imported from the medium or derived from its own cell wall murein, and thus plays a role in cell wall recycling. This chain is Anhydro-N-acetylmuramic acid kinase, found in Burkholderia mallei (strain NCTC 10229).